The primary structure comprises 146 residues: Transcriptional regulator MraZ (146 aa).

SpoVT-AbrB domains are found at residues Thr-6 to Glu-49 and Thr-78 to Ser-121.

It belongs to the MraZ family. Forms oligomers.

It localises to the cytoplasm. It is found in the nucleoid. In Mesoplasma florum (strain ATCC 33453 / NBRC 100688 / NCTC 11704 / L1) (Acholeplasma florum), this protein is Transcriptional regulator MraZ.